We begin with the raw amino-acid sequence, 155 residues long: uncharacterized protein (155 aa).

2 disordered regions span residues 24-63 (RVGYREGPTVETKKIQPQLPDEDGNESDKEDEQPQVVVLK) and 80-155 (KAAK…DENE). A compositionally biased stretch (acidic residues) spans 43–56 (PDEDGNESDKEDEQ). The residue at position 50 (S50) is a Phosphoserine. Residue K108 is modified to N6-acetyllysine. The span at 128–147 (KQSPVRKNSQKQIKNSSLLS) shows a compositional bias: polar residues. S130, S147, and S150 each carry phosphoserine.

This is an uncharacterized protein from Rattus norvegicus (Rat).